Here is a 221-residue protein sequence, read N- to C-terminus: 21 kDa seed protein (221 aa).

Residues 1-26 (MKTATAVVLLLFAFTSKSYFFGVANA) form the signal peptide. Cys-69 and Cys-116 are disulfide-bonded.

The protein belongs to the protease inhibitor I3 (leguminous Kunitz-type inhibitor) family.

The chain is 21 kDa seed protein (ASP) from Theobroma cacao (Cacao).